The following is an 83-amino-acid chain: Arminin 3a (83 aa).

The first 18 residues, 1–18 (MKTVFAILFLTFIALTCA), serve as a signal peptide directing secretion. Residues 19–57 (RNYEDLKEKIKNEVEREIFEDLEEESDELENNFKKFNDA) constitute a propeptide that is removed on maturation. At Ala-80 the chain carries Alanine amide.

This sequence belongs to the arminin family. Expressed in entodermal epithelium along the body column.

It localises to the secreted. Its subcellular location is the target cell membrane. Antimicrobial peptide with a broad-spectrum antimicrobial activity. Keeps its antibacterial activity under a wide range of salt concentrations that mimic physiological conditions of human blood, which is surprising, since Hydra is an obligate freshwater animal with nearly no salt tolerance. Does not affect red blood cells. This chain is Arminin 3a, found in Hydra vulgaris (Hydra).